The following is a 345-amino-acid chain: Arginase (345 aa).

Basic and acidic residues predominate over residues 1 to 16 (MKETAAAKFERQHMDS). The disordered stretch occupies residues 1–34 (MKETAAAKFERQHMDSPDLGTDDDDKMSPATSPF). Positions 101, 124, 126, 128, 232, and 234 each coordinate Mn(2+).

It belongs to the arginase family. Homotrimer. It depends on Mn(2+) as a cofactor.

It catalyses the reaction L-arginine + H2O = urea + L-ornithine. It functions in the pathway nitrogen metabolism; urea cycle; L-ornithine and urea from L-arginine: step 1/1. The enzyme activity is increased in the range of 20-50% upon the addition of Mn(2+) (1 mM), Co(2+) (1 mM), Ni(2+) (1 and 5 mM) and K(+) (5 mM). In contrast, the addition of Cu(2+), Zn(2+), Ca(2+), Mg(2+), Fe(2+) (both 1 and 5 mM), and Co(2+) (5 mM) strongly suppresses the arginase activity. SDS (1%) and EDTA (1 mM) are the most potent inhibitors. Reducing agents DTT (1 mM), PMSF (1 mM) and beta-mercaptoethanol (1 mM) also significantly inhibit activity by 85%, 64% and 35%, respectively. Surfactants Triton X-100 (1%), Tween-80 (1%) and Tween-20 (1%) are more tolerant, showing a slight decrease of arginase activity in the range of 10-30%. Cold-active L-arginase that catalyzes the hydrolysis of L-arginine to L-ornithine and urea, an essential reaction in the urea cycle for toxic ammonia removal and cell proliferation. Is not able to use D-arginine or L-canavanine as substrates. The sequence is that of Arginase from Glaciozyma antarctica (strain PI12) (Antarctic psychrophilic yeast).